Here is a 193-residue protein sequence, read N- to C-terminus: Resuscitation-promoting factor Rpf1 (193 aa).

The first 35 residues, 1–35 (MGRHSTKTSSAFTKLAASTIAFGAAATIMAPSASA), serve as a signal peptide directing secretion.

The protein belongs to the transglycosylase family. Rpf subfamily.

The protein resides in the secreted. Functionally, factor that stimulates resuscitation of dormant cells. Has peptidoglycan (PG) hydrolytic activity. Active in the pM concentration range. Has little to no effect on actively-growing cells. PG fragments could either directly activate the resuscitation pathway of dormant bacteria or serve as a substrate for endogenous Rpf, resulting in low molecular weight products with resuscitation activity. This chain is Resuscitation-promoting factor Rpf1 (rpf1), found in Corynebacterium glutamicum (strain ATCC 13032 / DSM 20300 / JCM 1318 / BCRC 11384 / CCUG 27702 / LMG 3730 / NBRC 12168 / NCIMB 10025 / NRRL B-2784 / 534).